Reading from the N-terminus, the 564-residue chain is MTTASAASERAVRQRLVRVARGLEAGDLLVRGAQVVQPATGEVFGADVLVAEGRVAALVGPGLGVRAARTVEARGAYLAPGFLDAHIHIESSLLTPARFAAAVLPRGTTAVVAEPHETVNVMGLSGLRWMLEAGKGSGLRVFGSVPSSVPASPFECGGAVLDAAEVAEALRLPGVLGLAEMMNYPGVLNLERGAWEVLDAGYGGRIDGHAAGVAGRDLQAYAAAGPHSDHEATTPEEARERLRAGLWLMVREGSAARNLEALLPVLRERPRRAMLVSDDVSVDELLSLGHLDRLLRACVAGGLHPADAVALVTCNPAEYWGLHDLGLVAPGYHADFVLLRDLERFEVLDTFVGGVEAQAGSETPPLPGGGVNLGPSWATATFEVPASWPVMQVRPDQITTGVGAPGSGDARLVVADRYGRGEHAACWTSGTGLTGGALAISLLHDAHHVAVLGGSNADVRAAGRALEAMGGGVVVVAGGEVRSNLPLPYAGLMSDLPPQEAAARLSEVTAAARVLGCTLPYPVTTLSFLGLSVIPALKLTPRGLLDVGAWQLLPRETVRVGAEG.

Belongs to the metallo-dependent hydrolases superfamily. Adenine deaminase family. Mn(2+) is required as a cofactor.

The catalysed reaction is adenine + H2O + H(+) = hypoxanthine + NH4(+). The polypeptide is Adenine deaminase (Deinococcus geothermalis (strain DSM 11300 / CIP 105573 / AG-3a)).